Here is a 116-residue protein sequence, read N- to C-terminus: MTEQAEDTMPIRFTDAAAAKVKTLLEEEQNDALKLRVYVTGGGCSGFQYGFTFDEKVNEGDFTVEKQGVQLVVDPMSLQYLVGGEVDYTSGLEGSRFFVKNPNATTTCGCGASFSV.

Residues Cys44, Cys108, and Cys110 each coordinate iron-sulfur cluster.

It belongs to the HesB/IscA family. As to quaternary structure, homodimer. The cofactor is iron-sulfur cluster.

Its function is as follows. Required for insertion of 4Fe-4S clusters for at least IspG. This Shewanella loihica (strain ATCC BAA-1088 / PV-4) protein is Iron-sulfur cluster insertion protein ErpA.